The primary structure comprises 596 residues: Protein FlbA (596 aa).

4 TPR repeats span residues 91-124, 159-192, 193-226, and 228-260; these read GLAWHILAIAREKTGDFASSLRAYEAALALLPDH, VEGANNLACALRELNRESEAIEVLKAALGANPEA, AVLWNTLGTVLCNIGDAAGSIVFFDESLRLAPDF, and KAYHNRAFARLDLGEIEAALADCEAAMRSPGSP.

The protein is Protein FlbA (flbA) of Caulobacter vibrioides (strain ATCC 19089 / CIP 103742 / CB 15) (Caulobacter crescentus).